A 115-amino-acid chain; its full sequence is Large ribosomal subunit protein bL19 (115 aa).

This sequence belongs to the bacterial ribosomal protein bL19 family.

This protein is located at the 30S-50S ribosomal subunit interface and may play a role in the structure and function of the aminoacyl-tRNA binding site. This Baumannia cicadellinicola subsp. Homalodisca coagulata protein is Large ribosomal subunit protein bL19.